The primary structure comprises 583 residues: MPVTDRSVPSLLQERADQQPDSTAYTYIDYGSDPKGFADSLTWSQVYSRACIIAEELKLCGLPGDRVAVLAPQGLEYVLAFLGALQAGFIAVPLSTPQYGIHDDRVSAVLQDSKPVAILTTSSVVGDVTKYAASHDGQPAPVVVEVDLLDLDSPRQMPAFSRQHTGAAYLQYTSGSTRTPAGVIVSHTNVIANVTQSMYGYFGDPAKIPTGTVVSWLPLYHDMGLILGICAPLVARRRAVLMSPMSFLRRPARWMQLLATSGRCFSAAPNFAFELAVRRTSDQDMAGLDLRDVVGIVSGSERIHVATVRRFIERFAPYNLSPTAIRPSYGLAEATLYVAAPEAGAAPKTVRFDYEQLTAGQARPCGTDGSVGTELISYGSPDPSSVRIVNPETMVENPPGVVGEIWVHGDHVTMGYWQKPKQTAQVFDAKLVDPAPAAPEGPWLRTGDLGVISDGELFIMGRIKDLLIVDGRNHYPDDIEATIQEITGGRAAAIAVPDDITEQLVAIIEFKRRGSTAEEVMLKLRSVKREVTSAISKSHSLRVADLVLVSPGSIPITTSGKIRRSACVERYRSDGFKRLDVAV.

The protein belongs to the ATP-dependent AMP-binding enzyme family.

The catalysed reaction is holo-[(phenol)carboxyphthiodiolenone synthase] + a long-chain fatty acid + ATP = a long-chain fatty acyl-[(phenol)carboxyphthiodiolenone synthase] + AMP + diphosphate. The enzyme catalyses eicosanoate + holo-[(phenol)carboxyphthiodiolenone synthase] + ATP = icosanoyl-[(phenol)carboxyphthiodiolenone synthase] + AMP + diphosphate. It carries out the reaction holo-[(phenol)carboxyphthiodiolenone synthase] + docosanoate + ATP = docosanoyl-[(phenol)carboxyphthiodiolenone synthase] + AMP + diphosphate. It participates in lipid metabolism; fatty acid biosynthesis. In terms of biological role, catalyzes the activation of long-chain fatty acids as acyl-adenylates (acyl-AMP), which are then transferred to the multifunctional polyketide synthase PpsA for further chain extension. Catalyzes the adenylation of the long-chain fatty acids eicosanoate (C20) or docosanoate (C22), and potentially the very-long-chain fatty acid lignocerate (C24). Involved in the biosynthesis of phthiocerol dimycocerosate (DIM A) and phthiodiolone dimycocerosate (DIM B). The sequence is that of Long-chain-fatty-acid--AMP ligase FadD26 (fadD26) from Mycobacterium bovis (strain ATCC BAA-935 / AF2122/97).